We begin with the raw amino-acid sequence, 661 residues long: Acetyl-coenzyme A synthetase (661 aa).

CoA contacts are provided by residues 197–200 (RGGK) and T320. ATP is bound by residues 396–398 (GEP), 420–425 (DTWWQT), D511, and R526. S534 contacts CoA. R537 contacts ATP. 2 residues coordinate Mg(2+): V548 and V553. K620 carries the post-translational modification N6-acetyllysine.

It belongs to the ATP-dependent AMP-binding enzyme family. Mg(2+) is required as a cofactor. In terms of processing, acetylated. Deacetylation by the SIR2-homolog deacetylase activates the enzyme.

The enzyme catalyses acetate + ATP + CoA = acetyl-CoA + AMP + diphosphate. Catalyzes the conversion of acetate into acetyl-CoA (AcCoA), an essential intermediate at the junction of anabolic and catabolic pathways. AcsA undergoes a two-step reaction. In the first half reaction, AcsA combines acetate with ATP to form acetyl-adenylate (AcAMP) intermediate. In the second half reaction, it can then transfer the acetyl group from AcAMP to the sulfhydryl group of CoA, forming the product AcCoA. This is Acetyl-coenzyme A synthetase from Leptospira interrogans serogroup Icterohaemorrhagiae serovar Lai (strain 56601).